The sequence spans 192 residues: Probable Brix domain-containing ribosomal biogenesis protein (192 aa).

The region spanning 2 to 191 is the Brix domain; it reads RPAAITTSQR…DFRTKDERMK (190 aa).

In terms of biological role, probably involved in the biogenesis of the ribosome. In Methanopyrus kandleri (strain AV19 / DSM 6324 / JCM 9639 / NBRC 100938), this protein is Probable Brix domain-containing ribosomal biogenesis protein.